We begin with the raw amino-acid sequence, 445 residues long: Inward rectifier potassium channel 4 (445 aa).

At Met1–Trp55 the chain is on the cytoplasmic side. The chain crosses the membrane as a helical span at residues Arg56–Ile80. Residues Ala81–Gly119 are Extracellular-facing. Positions Phe120–Gln131 form an intramembrane region, helical; Pore-forming. An intramembrane region (pore-forming) is located at residues Thr132–Phe138. A Selectivity filter motif is present at residues Thr133–Phe138. At Arg139–Leu147 the chain is on the extracellular side. Residues Ala148 to Thr169 traverse the membrane as a helical segment. The Cytoplasmic portion of the chain corresponds to Ile170–Ile445. A PDZ-binding motif is present at residues Ser443–Ile445.

This sequence belongs to the inward rectifier-type potassium channel (TC 1.A.2.1) family. KCNJ4 subfamily. Homomultimeric and heteromultimeric association with KCNJ2 and KCNJ12. Interacts with DLG2 and DLG4. Associates, via its PDZ-recognition domain, with a complex containing LIN7A, LIN7B, LIN7C, DLG1, CASK and APBA1. Interacts with TAX1BP3. TAX1BP3 competes with LIN7 family members for KCNJ4 binding. Highly expressed in the forebrain, moderately in skeletal muscle. Im olfactory bulb, specifically expressed at the postsynaptic membrane of dendritic spines of granule cells.

The protein localises to the cell membrane. Its subcellular location is the postsynaptic cell membrane. The protein resides in the cytoplasmic vesicle membrane. The catalysed reaction is K(+)(in) = K(+)(out). In terms of biological role, inward rectifier potassium channels are characterized by a greater tendency to allow potassium to flow into the cell rather than out of it. Their voltage dependence is regulated by the concentration of extracellular potassium; as external potassium is raised, the voltage range of the channel opening shifts to more positive voltages. The inward rectification is mainly due to the blockage of outward current by internal magnesium. Can be blocked by extracellular barium and cesium. The chain is Inward rectifier potassium channel 4 (Kcnj4) from Mus musculus (Mouse).